A 341-amino-acid chain; its full sequence is Holliday junction branch migration complex subunit RuvB (341 aa).

A disordered region spans residues 1 to 22 (MSETAGKGVTMPEIMQSSYPDE). A large ATPase domain (RuvB-L) region spans residues 4-193 (TAGKGVTMPE…FGIISRLEFY (190 aa)). ATP contacts are provided by residues I32, R33, G74, K77, T78, T79, 140-142 (EDY), R183, Y193, and R230. Position 78 (T78) interacts with Mg(2+). The segment at 194-264 (TPEELSQIIL…LVNHALQKLD (71 aa)) is small ATPAse domain (RuvB-S). A head domain (RuvB-H) region spans residues 267–341 (EKGLDQMDRK…KAYKHLNLTD (75 aa)). Positions 322 and 327 each coordinate DNA.

This sequence belongs to the RuvB family. Homohexamer. Forms an RuvA(8)-RuvB(12)-Holliday junction (HJ) complex. HJ DNA is sandwiched between 2 RuvA tetramers; dsDNA enters through RuvA and exits via RuvB. An RuvB hexamer assembles on each DNA strand where it exits the tetramer. Each RuvB hexamer is contacted by two RuvA subunits (via domain III) on 2 adjacent RuvB subunits; this complex drives branch migration. In the full resolvosome a probable DNA-RuvA(4)-RuvB(12)-RuvC(2) complex forms which resolves the HJ.

The protein resides in the cytoplasm. It catalyses the reaction ATP + H2O = ADP + phosphate + H(+). The RuvA-RuvB-RuvC complex processes Holliday junction (HJ) DNA during genetic recombination and DNA repair, while the RuvA-RuvB complex plays an important role in the rescue of blocked DNA replication forks via replication fork reversal (RFR). RuvA specifically binds to HJ cruciform DNA, conferring on it an open structure. The RuvB hexamer acts as an ATP-dependent pump, pulling dsDNA into and through the RuvAB complex. RuvB forms 2 homohexamers on either side of HJ DNA bound by 1 or 2 RuvA tetramers; 4 subunits per hexamer contact DNA at a time. Coordinated motions by a converter formed by DNA-disengaged RuvB subunits stimulates ATP hydrolysis and nucleotide exchange. Immobilization of the converter enables RuvB to convert the ATP-contained energy into a lever motion, pulling 2 nucleotides of DNA out of the RuvA tetramer per ATP hydrolyzed, thus driving DNA branch migration. The RuvB motors rotate together with the DNA substrate, which together with the progressing nucleotide cycle form the mechanistic basis for DNA recombination by continuous HJ branch migration. Branch migration allows RuvC to scan DNA until it finds its consensus sequence, where it cleaves and resolves cruciform DNA. This is Holliday junction branch migration complex subunit RuvB from Lawsonia intracellularis (strain PHE/MN1-00).